The sequence spans 674 residues: DNA ligase (674 aa).

NAD(+)-binding positions include 35–39 (DAEYD), 84–85 (SL), and glutamate 116. Lysine 118 serves as the catalytic N6-AMP-lysine intermediate. NAD(+) is bound by residues arginine 139, glutamate 176, lysine 293, and lysine 317. Zn(2+) is bound by residues cysteine 411, cysteine 414, cysteine 429, and cysteine 435. One can recognise a BRCT domain in the interval 593–674 (DGVKPLEGTT…LLALLEEHGV (82 aa)).

Belongs to the NAD-dependent DNA ligase family. LigA subfamily. It depends on Mg(2+) as a cofactor. Mn(2+) serves as cofactor.

It carries out the reaction NAD(+) + (deoxyribonucleotide)n-3'-hydroxyl + 5'-phospho-(deoxyribonucleotide)m = (deoxyribonucleotide)n+m + AMP + beta-nicotinamide D-nucleotide.. DNA ligase that catalyzes the formation of phosphodiester linkages between 5'-phosphoryl and 3'-hydroxyl groups in double-stranded DNA using NAD as a coenzyme and as the energy source for the reaction. It is essential for DNA replication and repair of damaged DNA. The protein is DNA ligase of Saccharophagus degradans (strain 2-40 / ATCC 43961 / DSM 17024).